We begin with the raw amino-acid sequence, 367 residues long: Voltage-gated potassium channel subunit beta-2 (367 aa).

S9, S14, and S20 each carry phosphoserine. Position 28 is an asymmetric dimethylarginine; alternate (R28). R28 carries the post-translational modification Omega-N-methylarginine; alternate. S31 carries the post-translational modification Phosphoserine. NADP(+) contacts are provided by T56, W57, Q63, and D85. The Proton donor/acceptor role is filled by Y90. Residue S112 is modified to Phosphoserine. K124 bears the N6-acetyllysine mark. Positions 158, 188, 189, 214, 243, 244, 245, 246, 247, 248, 254, 262, 264, 323, 325, 329, 332, and 333 each coordinate NADP(+).

The protein belongs to the shaker potassium channel beta subunit family. In terms of assembly, homotetramer. Interaction with tetrameric potassium channel alpha subunits gives rise to a heterooctamer. Identified in potassium channel complexes containing KCNA1, KCNA2, KCNA4, KCNA5, KCNA6, KCNAB1, KCNAB2 and KCND3. Interacts (in unphosphorylated form) with MAPRE1. Forms a ternary complex with SQSTM1 and PRKCZ. Post-translationally, phosphorylated by PRKCZ; may be regulated by incorporation in a complex composed of PRKCZ and SQSTM1. In terms of tissue distribution, detected in brain. Detected at basket cell terminals in cerebellum and in the juxtaparanodal region of nodes of Ranvier (at protein level). Strongest expression in brain and eye. Highest levels in brain detected in brainstem and diencephalon. Strong expression also detected in lung and heart. Moderate expression in kidney, T-lymphocytes and skeletal muscle.

It localises to the cytoplasm. The protein resides in the membrane. The protein localises to the cell membrane. It is found in the cell projection. Its subcellular location is the axon. It localises to the synapse. The protein resides in the synaptosome. The protein localises to the cytoskeleton. It carries out the reaction hydroxyacetone + NADP(+) = methylglyoxal + NADPH + H(+). The catalysed reaction is (E)-4-oxonon-2-en-1-ol + NADP(+) = (E)-4-oxonon-2-enal + NADPH + H(+). Regulatory subunit of the voltage-gated potassium (Kv) Shaker channel family. Shaker channels are composed of pore-forming and potassium-conducting alpha subunits and of regulatory beta subunits. The beta-2/KCNAB2 subunit promotes potassium channel closure via a mechanism that does not involve physical obstruction of the channel pore. Promotes the inactivation of Kv1.4/KCNA4 and Kv1.5/KCNA5 alpha subunit-containing channels. Displays nicotinamide adenine dinucleotide phosphate (NADPH)-dependent aldoketoreductase activity by catalyzing the NADPH-dependent reduction of a wide range of aldehyde and ketone substrates. Substrate specificity includes methylglyoxal, 9,10-phenanthrenequinone, prostaglandin J2, 4-nitrobenzaldehyde, 4-nitroacetophenone and 4-oxo-trans-2-nonenal (in vitro, no physiological substrate identified yet). The binding of oxidized and reduced nucleotide cofactors alters Kv channel gating and may contribute to dynamic fine tuning of cell excitability. Contributes to the regulation of nerve signaling, and prevents neuronal hyperexcitability. In Mus musculus (Mouse), this protein is Voltage-gated potassium channel subunit beta-2.